A 767-amino-acid chain; its full sequence is Cap-specific mRNA (nucleoside-2'-O-)-methyltransferase 2 (767 aa).

In terms of domain architecture, Adrift-type SAM-dependent 2'-O-MTase spans 109-322; sequence ELCTQAWCKF…VYVVCLRYKG (214 aa). Lysine 117 is an active-site residue. S-adenosyl-L-methionine contacts are provided by glycine 148, tryptophan 167, and aspartate 235. Aspartate 235 is a catalytic residue. The Proton acceptor role is filled by lysine 275.

The protein resides in the nucleus. Its subcellular location is the cytoplasm. The catalysed reaction is a 5'-end (N(7)-methyl 5'-triphosphoguanosine)-(2'-O-methyl-ribonucleoside)-(ribonucleotide) in mRNA + S-adenosyl-L-methionine = a 5'-end (N(7)-methyl 5'-triphosphoguanosine)-(2'-O-methyl-ribonucleoside)-(2'-O-methyl-ribonucleotide) in mRNA + S-adenosyl-L-homocysteine + H(+). Functionally, S-adenosyl-L-methionine-dependent methyltransferase that mediates mRNA cap2 2'-O-ribose methylation to the 5'-cap structure of mRNAs. Methylates the ribose of the second nucleotide of a m(7)GpppG-capped mRNA and small nuclear RNA (snRNA) (cap0) to produce m(7)GpppRmpNm (cap2). Recognizes a guanosine cap on RNA independently of its N(7) methylation status. Display cap2 methylation on both cap0 and cap1. Displays a preference for cap1 RNAs. The protein is Cap-specific mRNA (nucleoside-2'-O-)-methyltransferase 2 (Cmtr2) of Mus musculus (Mouse).